A 179-amino-acid polypeptide reads, in one-letter code: uncharacterized protein (179 aa).

A disordered region spans residues 53–82; it reads SPEREDPESPTRGVDEVDGACSEPPTPRPE. The segment covering 54–67 has biased composition (basic and acidic residues); sequence PEREDPESPTRGVD.

This is an uncharacterized protein from Ictaluridae (bullhead catfishes).